The sequence spans 222 residues: Chymotrypsin-1 (222 aa).

Positions 1 to 221 (IVGGKDAPVG…FVSWINANLK (221 aa)) constitute a Peptidase S1 domain. Cysteines 26 and 42 form a disulfide. Catalysis depends on charge relay system residues histidine 41 and aspartate 87. 2 disulfides stabilise this stretch: cysteine 151/cysteine 164 and cysteine 174/cysteine 198. The active-site Charge relay system is the serine 178.

Belongs to the peptidase S1 family.

The protein resides in the secreted. Its subcellular location is the extracellular space. The enzyme catalyses Preferential cleavage: Tyr-|-Xaa, Trp-|-Xaa, Phe-|-Xaa, Leu-|-Xaa.. This is Chymotrypsin-1 from Solenopsis invicta (Red imported fire ant).